Consider the following 522-residue polypeptide: BAR/IMD domain-containing adapter protein 2-like 2 (522 aa).

Positions 1 to 239 (MAPEMDQFYR…HSPGLLGPAL (239 aa)) constitute an IMD domain. Disordered stretches follow at residues 220–325 (SEAS…GGGG) and 404–502 (PMSP…GTNP). A phosphoserine mark is found at Ser231, Ser272, and Ser303. Over residues 297-317 (RTPSASSLYASSTQRSRSNSF) the composition is skewed to polar residues. The region spanning 324-387 (GGARRVRALV…PEAYVKPVEE (64 aa)) is the SH3 domain. Over residues 443-456 (SQSRSRTPSRVPSR) the composition is skewed to low complexity. Positions 457 to 466 (APSPAPPPLP) are enriched in pro residues. Phosphoserine occurs at positions 472 and 475.

As to expression, expressed in the epithelial layer of the intestine and in the kidney.

The protein localises to the cell membrane. Its subcellular location is the cell junction. It localises to the cytoplasmic vesicle membrane. Its function is as follows. Phosphoinositides-binding protein that induces the formation of planar or gently curved membrane structures. Binds to phosphoinositides, including to phosphatidylinositol 4,5-bisphosphate (PtdIns(4,5)P2) headgroups. There seems to be no clear preference for a specific phosphoinositide. The protein is BAR/IMD domain-containing adapter protein 2-like 2 (Baiap2l2) of Mus musculus (Mouse).